A 361-amino-acid chain; its full sequence is Phosphate acyltransferase (361 aa).

A disordered region spans residues 340 to 361; it reads VPADGAATEQGPTPRRIAPPRT.

The protein belongs to the PlsX family. As to quaternary structure, homodimer. Probably interacts with PlsY.

The protein localises to the cytoplasm. It carries out the reaction a fatty acyl-[ACP] + phosphate = an acyl phosphate + holo-[ACP]. It participates in lipid metabolism; phospholipid metabolism. Its function is as follows. Catalyzes the reversible formation of acyl-phosphate (acyl-PO(4)) from acyl-[acyl-carrier-protein] (acyl-ACP). This enzyme utilizes acyl-ACP as fatty acyl donor, but not acyl-CoA. The protein is Phosphate acyltransferase of Anaeromyxobacter dehalogenans (strain 2CP-1 / ATCC BAA-258).